A 499-amino-acid polypeptide reads, in one-letter code: Gypsy retrotransposon integrase-like protein 1 (499 aa).

In terms of domain architecture, Integrase catalytic spans 113-270 (KVENPWSIVT…TPYFQMFNRN (158 aa)).

In Bos taurus (Bovine), this protein is Gypsy retrotransposon integrase-like protein 1 (GIN1).